We begin with the raw amino-acid sequence, 406 residues long: Cysteine desulfurase (406 aa).

The residue at position 226 (Lys-226) is an N6-(pyridoxal phosphate)lysine. Catalysis depends on Cys-364, which acts as the Cysteine persulfide intermediate.

The protein belongs to the class-V pyridoxal-phosphate-dependent aminotransferase family. Csd subfamily. In terms of assembly, homodimer. Interacts with SufE and the SufBCD complex composed of SufB, SufC and SufD. The interaction with SufE is required to mediate the direct transfer of the sulfur atom from the S-sulfanylcysteine. The cofactor is pyridoxal 5'-phosphate.

The protein localises to the cytoplasm. It carries out the reaction (sulfur carrier)-H + L-cysteine = (sulfur carrier)-SH + L-alanine. The catalysed reaction is L-selenocysteine + AH2 = hydrogenselenide + L-alanine + A + H(+). It functions in the pathway cofactor biosynthesis; iron-sulfur cluster biosynthesis. Functionally, cysteine desulfurases mobilize the sulfur from L-cysteine to yield L-alanine, an essential step in sulfur metabolism for biosynthesis of a variety of sulfur-containing biomolecules. Component of the suf operon, which is activated and required under specific conditions such as oxidative stress and iron limitation. Acts as a potent selenocysteine lyase in vitro, that mobilizes selenium from L-selenocysteine. Selenocysteine lyase activity is however unsure in vivo. This Escherichia coli O17:K52:H18 (strain UMN026 / ExPEC) protein is Cysteine desulfurase.